The chain runs to 1236 residues: Calcium-activated potassium channel subunit alpha-1 (1236 aa).

Gly residues predominate over residues 1–21 (MANGGGGGGGSSGGGGGGGGS). The disordered stretch occupies residues 1-61 (MANGGGGGGG…SSSSSSSSSV (61 aa)). Residues 1–86 (MANGGGGGGG…VPCDSRGQRM (86 aa)) are Extracellular-facing. Positions 39–60 (SSSSSSSSSSSSSSSSSSSSSS) are enriched in low complexity. A helical membrane pass occupies residues 87 to 107 (WWAFLASSMVTFFGGLFIILL). Residues 108 to 178 (WRTLKYLWTV…MISAQTLTGR (71 aa)) lie on the Cytoplasmic side of the membrane. 3 S-palmitoyl cysteine lipidation sites follow: Cys118, Cys119, and Cys121. The chain crosses the membrane as a helical span at residues 179-199 (VLVVLVFALSIGALVIYFIDS). Residues 200–214 (SNPIESCQNFYKDFT) lie on the Extracellular side of the membrane. The chain crosses the membrane as a helical span at residues 215–235 (LQIDMAFNVFFLLYFGLRFIA). Residues 236 to 239 (ANDK) are Cytoplasmic-facing. The chain crosses the membrane as a helical span at residues 240–260 (LWFWLEVNSVVDFFTVPPVFV). At 261–264 (SVYL) the chain is on the extracellular side. A helical transmembrane segment spans residues 265–285 (NRSWLGLRFLRALRLIQFSEI). Over 286–300 (LQFLNILKTSNSIKL) the chain is Cytoplasmic. A helical transmembrane segment spans residues 301–321 (VNLLSIFISTWLTAAGFIHLV). Residues 322–335 (ENSGDPWENFQNNQ) are Extracellular-facing. Residues 336-358 (ALTYWECVYLLMVTMSTVGYGDV) constitute an intramembrane region (pore-forming). The Selectivity for potassium signature appears at 352-355 (TVGY). The Extracellular segment spans residues 359 to 367 (YAKTTLGRL). A helical membrane pass occupies residues 368–388 (FMVFFILGGLAMFASYVPEII). At 389-1236 (ELIGNRKKYG…KQKYVQEERL (848 aa)) the chain is on the cytoplasmic side. The region spanning 407 to 549 (RKHIVVCGHI…WNWKEGDDAI (143 aa)) is the RCK N-terminal 1 domain. Glu439, Gln462, and Glu464 together coordinate Mg(2+). The segment at 556–576 (LGFIAQSCLAQGLSTMLANLF) is segment S7. The segment S8 stretch occupies residues 613–633 (LSFPTVCELCFVKLKLLMIAI). The interval 677–681 (CKACH) is heme-binding motif. The disordered stretch occupies residues 757 to 787 (EDEQPSTLSPKKKQRNGGMRNSPNTSPKLMR). Thr763 carries the post-translational modification Phosphothreonine. Residues Ser765, Ser778, and Ser782 each carry the phosphoserine modification. Residues 837 to 857 (VLSGHVVVCIFGDVSSALIGL) form a segment S9 region. The 145-residue stretch at 839-983 (SGHVVVCIFG…MDRSSPDNSP (145 aa)) folds into the RCK N-terminal 2 domain. Thr970 bears the Phosphothreonine mark. Ser978 and Ser982 each carry phosphoserine. A Calcium bowl motif is present at residues 1003 to 1025 (TELVNDTNVQFLDQDDDDDPDTE). 4 residues coordinate Ca(2+): Gln1012, Asp1015, Asp1018, and Asp1020. The segment at 1032-1052 (FACGTAFAVSVLDSLMSATYF) is segment S10. Positions 1186–1211 (RASLSHSSHSSQSSSKKSSSVHSIPS) are enriched in low complexity. The disordered stretch occupies residues 1186–1236 (RASLSHSSHSSQSSSKKSSSVHSIPSTANRQNRPKSRESRDKQKYVQEERL). Over residues 1220–1236 (KSRESRDKQKYVQEERL) the composition is skewed to basic and acidic residues. 2 positions are modified to phosphoserine: Ser1221 and Ser1224.

This sequence belongs to the potassium channel family. Calcium-activated (TC 1.A.1.3) subfamily. KCa1.1/KCNMA1 sub-subfamily. In terms of assembly, homotetramer; which constitutes the calcium-activated potassium channel. Interacts with RAB11B. Interacts with beta subunits KCNMB1, KCNMB2, KCNMB3 and KCNMB4. Interacts with gamma subunits LRRC26, LRRC38, LRRC52 and LRRC55. Beta and gamma subunits are accessory, and modulate its activity. Post-translationally, phosphorylated. Phosphorylation by kinases such as PKA and/or PKG. In smooth muscles, phosphorylation affects its activity. Palmitoylation by ZDHHC22 and ZDHHC23 within the intracellular linker between the S0 and S1 transmembrane domains regulates localization to the plasma membrane. Depalmitoylated by LYPLA1 and LYPLAL1, leading to retard exit from the trans-Golgi network. Widely expressed. Except in myocytes, it is almost ubiquitously expressed.

The protein localises to the cell membrane. It catalyses the reaction K(+)(in) = K(+)(out). With respect to regulation, ethanol and carbon monoxide-bound heme increase channel activation. Heme inhibits channel activation. Potassium channel activated by both membrane depolarization or increase in cytosolic Ca(2+) that mediates export of K(+). It is also activated by the concentration of cytosolic Mg(2+). Its activation dampens the excitatory events that elevate the cytosolic Ca(2+) concentration and/or depolarize the cell membrane. It therefore contributes to repolarization of the membrane potential. Plays a key role in controlling excitability in a number of systems, such as regulation of the contraction of smooth muscle, the tuning of hair cells in the cochlea, regulation of transmitter release, and innate immunity. In smooth muscles, its activation by high level of Ca(2+), caused by ryanodine receptors in the sarcoplasmic reticulum, regulates the membrane potential. In cochlea cells, its number and kinetic properties partly determine the characteristic frequency of each hair cell and thereby helps to establish a tonotopic map. Kinetics of KCNMA1 channels are determined by alternative splicing, phosphorylation status and its combination with modulating beta subunits. Highly sensitive to both iberiotoxin (IbTx) and charybdotoxin (CTX). Possibly induces sleep when activated by melatonin and through melatonin receptor MTNR1A-dependent dissociation of G-beta and G-gamma subunits, leading to increased sensitivity to Ca(2+) and reduced synaptic transmission. Functionally, potassium channel activated by both membrane depolarization or increase in cytosolic Ca(2+) that mediates export of K(+). This Homo sapiens (Human) protein is Calcium-activated potassium channel subunit alpha-1.